The following is a 211-amino-acid chain: Large ribosomal subunit protein uL3 (211 aa).

Q150 carries the N5-methylglutamine modification.

It belongs to the universal ribosomal protein uL3 family. In terms of assembly, part of the 50S ribosomal subunit. Forms a cluster with proteins L14 and L19. Methylated by PrmB.

Functionally, one of the primary rRNA binding proteins, it binds directly near the 3'-end of the 23S rRNA, where it nucleates assembly of the 50S subunit. In Pseudomonas syringae pv. tomato (strain ATCC BAA-871 / DC3000), this protein is Large ribosomal subunit protein uL3.